The chain runs to 100 residues: ATP synthase subunit c (100 aa).

Transmembrane regions (helical) follow at residues 26–46 and 71–91; these read FSVV…AIGM and MFIA…IALI.

Belongs to the ATPase C chain family. F-type ATPases have 2 components, F(1) - the catalytic core - and F(0) - the membrane proton channel. F(1) has five subunits: alpha(3), beta(3), gamma(1), delta(1), epsilon(1). F(0) has three main subunits: a(1), b(2) and c(10-14). The alpha and beta chains form an alternating ring which encloses part of the gamma chain. F(1) is attached to F(0) by a central stalk formed by the gamma and epsilon chains, while a peripheral stalk is formed by the delta and b chains.

The protein resides in the cell inner membrane. Its function is as follows. F(1)F(0) ATP synthase produces ATP from ADP in the presence of a proton or sodium gradient. F-type ATPases consist of two structural domains, F(1) containing the extramembraneous catalytic core and F(0) containing the membrane proton channel, linked together by a central stalk and a peripheral stalk. During catalysis, ATP synthesis in the catalytic domain of F(1) is coupled via a rotary mechanism of the central stalk subunits to proton translocation. Functionally, key component of the F(0) channel; it plays a direct role in translocation across the membrane. A homomeric c-ring of between 10-14 subunits forms the central stalk rotor element with the F(1) delta and epsilon subunits. The protein is ATP synthase subunit c of Campylobacter fetus subsp. fetus (strain 82-40).